The sequence spans 412 residues: DNA replication and repair protein RecF (412 aa).

ATP is bound at residue 30–37 (GKNGLGKT).

The protein belongs to the RecF family.

The protein localises to the cytoplasm. In terms of biological role, the RecF protein is involved in DNA metabolism; it is required for DNA replication and normal SOS inducibility. RecF binds preferentially to single-stranded, linear DNA. It also seems to bind ATP. This chain is DNA replication and repair protein RecF, found in Bifidobacterium longum subsp. infantis (strain ATCC 15697 / DSM 20088 / JCM 1222 / NCTC 11817 / S12).